A 109-amino-acid polypeptide reads, in one-letter code: Preprofallaxidin-8 (109 aa).

The signal sequence occupies residues 1–22 (MASLKKSLFLVLFLGLLSLSIC). A propeptide spanning residues 23 to 46 (EEQKRENEEDAEDENHEEESEEKR) is cleaved from the precursor. Residues 27–46 (RENEEDAEDENHEEESEEKR) form a disordered region. Acidic residues predominate over residues 30 to 42 (EEDAEDENHEEES). A Leucine amide modification is found at Leu-62. The propeptide occupies 66–70 (SEEKR). Position 75 is a methionine amide (Met-75). The propeptide occupies 79 to 83 (SEEKR). A Methionine amide modification is found at Met-88. 2 consecutive propeptides follow at residues 92–96 (SEEKR) and Ala-108.

It belongs to the frog skin active peptide (FSAP) family. Brevinin subfamily. As to expression, expressed by the skin glands.

It is found in the secreted. Functionally, fallaxidin-2.1 shows no antibacterial activity against Gram-positive or Gram-negative bacteria. Does not inhibit the formation of NO by neuronal nitric oxide synthase. Has no effect on splenocyte proliferation or smooth muscle contraction. Fallaxidin-3.2 shows antibacterial activity against the Gram-positive bacteria E.faecalis (MIC=100 uM) and L.lactis (MIC=500 uM). No antibacterial activity against the Gram-positive bacteria B.cereus, L.innocua, M.luteus, S.epidermidis, S.uberis and S.aureus, or the Gram-negative bacteria E.cloacae and E.coli. This is Preprofallaxidin-8 from Litoria fallax (Eastern dwarf tree frog).